The chain runs to 676 residues: Ribonuclease R (676 aa).

In terms of domain architecture, RNB spans 207–527 (RKDLRDLLCF…LIVHRLLFNP (321 aa)). The region spanning 566-651 (NKFLQEQPKT…LTQKIVWSIA (86 aa)) is the S1 motif domain. Residues 656-676 (DKPKKIKKTPSKKKGTKKRAS) are disordered. Residues 659–676 (KKIKKTPSKKKGTKKRAS) show a composition bias toward basic residues.

The protein belongs to the RNR ribonuclease family. RNase R subfamily.

Its subcellular location is the cytoplasm. The enzyme catalyses Exonucleolytic cleavage in the 3'- to 5'-direction to yield nucleoside 5'-phosphates.. In terms of biological role, 3'-5' exoribonuclease that releases 5'-nucleoside monophosphates and is involved in maturation of structured RNAs. This chain is Ribonuclease R, found in Chlamydia pneumoniae (Chlamydophila pneumoniae).